We begin with the raw amino-acid sequence, 407 residues long: Phosphopentomutase (407 aa).

Mn(2+) is bound by residues aspartate 10, aspartate 306, histidine 311, aspartate 347, histidine 348, and histidine 359.

Belongs to the phosphopentomutase family. It depends on Mn(2+) as a cofactor.

The protein localises to the cytoplasm. It catalyses the reaction 2-deoxy-alpha-D-ribose 1-phosphate = 2-deoxy-D-ribose 5-phosphate. It carries out the reaction alpha-D-ribose 1-phosphate = D-ribose 5-phosphate. It functions in the pathway carbohydrate degradation; 2-deoxy-D-ribose 1-phosphate degradation; D-glyceraldehyde 3-phosphate and acetaldehyde from 2-deoxy-alpha-D-ribose 1-phosphate: step 1/2. Functionally, isomerase that catalyzes the conversion of deoxy-ribose 1-phosphate (dRib-1-P) and ribose 1-phosphate (Rib-1-P) to deoxy-ribose 5-phosphate (dRib-5-P) and ribose 5-phosphate (Rib-5-P), respectively. The sequence is that of Phosphopentomutase from Escherichia coli (strain UTI89 / UPEC).